A 496-amino-acid polypeptide reads, in one-letter code: Maturase K (496 aa).

Belongs to the intron maturase 2 family. MatK subfamily.

The protein localises to the plastid. The protein resides in the chloroplast. Functionally, usually encoded in the trnK tRNA gene intron. Probably assists in splicing its own and other chloroplast group II introns. This chain is Maturase K, found in Paeonia suffruticosa (Tree peony).